Here is a 136-residue protein sequence, read N- to C-terminus: Large ribosomal subunit protein uL16 (136 aa).

Belongs to the universal ribosomal protein uL16 family. Part of the 50S ribosomal subunit.

In terms of biological role, binds 23S rRNA and is also seen to make contacts with the A and possibly P site tRNAs. This chain is Large ribosomal subunit protein uL16, found in Salmonella agona (strain SL483).